Here is a 196-residue protein sequence, read N- to C-terminus: Rac-like GTP-binding protein ARAC5 (196 aa).

16–21 (AVGKTC) is a binding site for GTP. The Effector region motif lies at 35–43 (YVPTVFDNF). Residues 119–121 (KLD) and 159–161 (SSK) contribute to the GTP site. At C193 the chain carries Cysteine methyl ester. C193 carries the S-geranylgeranyl cysteine lipid modification. Positions 194–196 (VFL) are cleaved as a propeptide — removed in mature form.

It belongs to the small GTPase superfamily. Rho family. Interacts with GDI1 and ROPGEF8 homodimer. Binds to SPK1. In terms of tissue distribution, ubiquitous. Preferentially expressed at the tip of root hairs.

It localises to the cytoplasm. The protein resides in the membrane. The protein localises to the cell membrane. In terms of biological role, involved in cell polarity control during the actin-dependent tip growth of root hairs, thus regulating root hair length and root hair initiation. Functionally, inactive GDP-bound Rho GTPases reside in the cytosol, are found in a complex with Rho GDP-dissociation inhibitors (Rho GDIs), and are released from the GDI protein in order to translocate to membranes upon activation. The chain is Rac-like GTP-binding protein ARAC5 from Arabidopsis thaliana (Mouse-ear cress).